A 444-amino-acid chain; its full sequence is L-ornithine N(5)-monooxygenase (444 aa).

FAD is bound by residues 40-48 (ERQPAFGWH) and glutamine 59. Lysine 64 lines the substrate pocket. Valine 125 contacts FAD. Residues 211-214 (AGQS) and arginine 236 each bind NADP(+). Substrate contacts are provided by residues 250–253 (NEIF) and asparagine 280. Residue 280 to 282 (NYA) participates in NADP(+) binding. 408–410 (RCC) contributes to the FAD binding site. The span at 420–432 (SARRSKTGSRPRT) shows a compositional bias: basic residues. Residues 420-444 (SARRSKTGSRPRTMKAWPGPRTKND) form a disordered region.

This sequence belongs to the lysine N(6)-hydroxylase/L-ornithine N(5)-oxygenase family. FAD is required as a cofactor.

The catalysed reaction is L-ornithine + NADPH + O2 = N(5)-hydroxy-L-ornithine + NADP(+) + H2O. It functions in the pathway siderophore biosynthesis; ornibactin biosynthesis. Its function is as follows. Catalyzes the conversion of L-ornithine to N(5)-hydroxyornithine, the first step in the biosynthesis of all hydroxamate-containing siderophores, such as ornibactin. The protein is L-ornithine N(5)-monooxygenase of Burkholderia cepacia (Pseudomonas cepacia).